Reading from the N-terminus, the 260-residue chain is 5'-nucleotidase SurE (260 aa).

4 residues coordinate a divalent metal cation: Asp8, Asp9, Ser43, and Asn96.

The protein belongs to the SurE nucleotidase family. A divalent metal cation serves as cofactor.

The protein localises to the cytoplasm. It catalyses the reaction a ribonucleoside 5'-phosphate + H2O = a ribonucleoside + phosphate. Nucleotidase that shows phosphatase activity on nucleoside 5'-monophosphates. This chain is 5'-nucleotidase SurE, found in Ruegeria sp. (strain TM1040) (Silicibacter sp.).